Consider the following 454-residue polypeptide: UDP-N-acetylmuramoylalanine--D-glutamate ligase (454 aa).

ATP is bound at residue 115-121 (GTNGKTT).

The protein belongs to the MurCDEF family.

It localises to the cytoplasm. The catalysed reaction is UDP-N-acetyl-alpha-D-muramoyl-L-alanine + D-glutamate + ATP = UDP-N-acetyl-alpha-D-muramoyl-L-alanyl-D-glutamate + ADP + phosphate + H(+). It functions in the pathway cell wall biogenesis; peptidoglycan biosynthesis. Functionally, cell wall formation. Catalyzes the addition of glutamate to the nucleotide precursor UDP-N-acetylmuramoyl-L-alanine (UMA). The protein is UDP-N-acetylmuramoylalanine--D-glutamate ligase of Thermoanaerobacter pseudethanolicus (strain ATCC 33223 / 39E) (Clostridium thermohydrosulfuricum).